A 340-amino-acid polypeptide reads, in one-letter code: Glyceraldehyde-3-phosphate dehydrogenase, cytosolic (340 aa).

Residues 16–17 (RI), aspartate 38, and arginine 85 contribute to the NAD(+) site. D-glyceraldehyde 3-phosphate is bound by residues 156-158 (SCT), threonine 187, 216-217 (TG), and arginine 239. Residue cysteine 157 is the Nucleophile of the active site. Asparagine 321 is an NAD(+) binding site.

This sequence belongs to the glyceraldehyde-3-phosphate dehydrogenase family. Homotetramer.

It is found in the cytoplasm. The enzyme catalyses D-glyceraldehyde 3-phosphate + phosphate + NAD(+) = (2R)-3-phospho-glyceroyl phosphate + NADH + H(+). It participates in carbohydrate degradation; glycolysis; pyruvate from D-glyceraldehyde 3-phosphate: step 1/5. Functionally, key enzyme in glycolysis that catalyzes the first step of the pathway by converting D-glyceraldehyde 3-phosphate (G3P) into 3-phospho-D-glyceroyl phosphate. Essential for the maintenance of cellular ATP levels and carbohydrate metabolism. The polypeptide is Glyceraldehyde-3-phosphate dehydrogenase, cytosolic (Ginkgo biloba (Ginkgo)).